The following is a 195-amino-acid chain: Probable GTP-binding protein EngB (195 aa).

The EngB-type G domain occupies 22–195 (GLPEIALAGR…WNAILAKINK (174 aa)). Residues 30–37 (GRSNVGKS), 57–61 (GKTQT), 75–78 (DVPG), 142–145 (TKAD), and 174–176 (FSS) each bind GTP. Mg(2+) is bound by residues Ser-37 and Thr-59.

The protein belongs to the TRAFAC class TrmE-Era-EngA-EngB-Septin-like GTPase superfamily. EngB GTPase family. Mg(2+) serves as cofactor.

Necessary for normal cell division and for the maintenance of normal septation. The protein is Probable GTP-binding protein EngB of Bacillus pumilus (strain SAFR-032).